Consider the following 705-residue polypeptide: Elongation factor G (705 aa).

Residues 8-294 (ELYRNFGIMA…SVIDYLPSPL (287 aa)) enclose the tr-type G domain. Residues 17–24 (AHIDAGKT), 92–96 (DTPGH), and 146–149 (NKMD) each bind GTP.

This sequence belongs to the TRAFAC class translation factor GTPase superfamily. Classic translation factor GTPase family. EF-G/EF-2 subfamily.

The protein resides in the cytoplasm. Catalyzes the GTP-dependent ribosomal translocation step during translation elongation. During this step, the ribosome changes from the pre-translocational (PRE) to the post-translocational (POST) state as the newly formed A-site-bound peptidyl-tRNA and P-site-bound deacylated tRNA move to the P and E sites, respectively. Catalyzes the coordinated movement of the two tRNA molecules, the mRNA and conformational changes in the ribosome. This is Elongation factor G from Cereibacter sphaeroides (strain KD131 / KCTC 12085) (Rhodobacter sphaeroides).